A 125-amino-acid chain; its full sequence is Small ribosomal subunit protein uS13 (125 aa).

The protein belongs to the universal ribosomal protein uS13 family. As to quaternary structure, part of the 30S ribosomal subunit. Forms a loose heterodimer with protein S19. Forms two bridges to the 50S subunit in the 70S ribosome.

In terms of biological role, located at the top of the head of the 30S subunit, it contacts several helices of the 16S rRNA. In the 70S ribosome it contacts the 23S rRNA (bridge B1a) and protein L5 of the 50S subunit (bridge B1b), connecting the 2 subunits; these bridges are implicated in subunit movement. Contacts the tRNAs in the A and P-sites. The protein is Small ribosomal subunit protein uS13 of Gluconobacter oxydans (strain 621H) (Gluconobacter suboxydans).